The chain runs to 297 residues: ClpXP adapter protein SpxH (297 aa).

Belongs to the SpxH family. In terms of assembly, interacts with Spx.

It is found in the cytoplasm. In terms of biological role, adapter protein required for efficient degradation of Spx by ClpXP under non-stress conditions. Interaction with Spx stabilizes Spx and exposes the C-terminus of Spx for recognition and proteolysis by ClpXP. The protein is ClpXP adapter protein SpxH of Bacillus cereus (strain ATCC 14579 / DSM 31 / CCUG 7414 / JCM 2152 / NBRC 15305 / NCIMB 9373 / NCTC 2599 / NRRL B-3711).